The chain runs to 412 residues: MFNLNEISKIDPEVAKAIELEVNRQRNKIELIASENFVSKAVIEAMGTPLTNKYAEGYPGKRYYGGCEFVDIIENLAIERAKKIFGAEHANVQPHSGAQANMAVFFAVLNPGDTILGMNLSHGGHLSHGSPVNMSGKYYNVISYGVRKEDCRIDYDEVRKLAKEHRPKLIVAGASAYPRIIDFKAFRDIADEVGAYLMVDIAHIAGLVAAGLHPNPVPYAHFVTTTTHKTLRGPRGGLILCGNEHAKMIDKAVFPGIQGGPLMHVIAAKAVSFAEVLTDEFKQYQQQIVKNAKTLANALMEKGIDLVSGGTDNHLMLVDLRNKGLTGKYVQHILDEVCITVNKNGIPFDPESPFVTSGIRIGTPAVTARGMKEEDMVEIADLINLTITDYENSKEKVKERVRMLCEKYPLYQ.

(6S)-5,6,7,8-tetrahydrofolate-binding positions include leucine 120 and 124–126 (GHL). An N6-(pyridoxal phosphate)lysine modification is found at lysine 229. Position 352–354 (352–354 (SPF)) interacts with (6S)-5,6,7,8-tetrahydrofolate.

This sequence belongs to the SHMT family. Homodimer. Pyridoxal 5'-phosphate serves as cofactor.

The protein localises to the cytoplasm. The catalysed reaction is (6R)-5,10-methylene-5,6,7,8-tetrahydrofolate + glycine + H2O = (6S)-5,6,7,8-tetrahydrofolate + L-serine. It participates in one-carbon metabolism; tetrahydrofolate interconversion. It functions in the pathway amino-acid biosynthesis; glycine biosynthesis; glycine from L-serine: step 1/1. Catalyzes the reversible interconversion of serine and glycine with tetrahydrofolate (THF) serving as the one-carbon carrier. This reaction serves as the major source of one-carbon groups required for the biosynthesis of purines, thymidylate, methionine, and other important biomolecules. Also exhibits THF-independent aldolase activity toward beta-hydroxyamino acids, producing glycine and aldehydes, via a retro-aldol mechanism. This is Serine hydroxymethyltransferase from Acetivibrio thermocellus (strain ATCC 27405 / DSM 1237 / JCM 9322 / NBRC 103400 / NCIMB 10682 / NRRL B-4536 / VPI 7372) (Clostridium thermocellum).